A 357-amino-acid chain; its full sequence is Protein RecA (357 aa).

Residue 71-78 (GPESSGKT) coordinates ATP.

This sequence belongs to the RecA family.

The protein resides in the cytoplasm. Its function is as follows. Can catalyze the hydrolysis of ATP in the presence of single-stranded DNA, the ATP-dependent uptake of single-stranded DNA by duplex DNA, and the ATP-dependent hybridization of homologous single-stranded DNAs. It interacts with LexA causing its activation and leading to its autocatalytic cleavage. This is Protein RecA from Ehrlichia chaffeensis (strain ATCC CRL-10679 / Arkansas).